The primary structure comprises 120 residues: Glycine cleavage system H protein (120 aa).

The Lipoyl-binding domain occupies 19-101 (DGTVGISDFA…YTDGWLFRLD (83 aa)). An N6-lipoyllysine modification is found at lysine 60.

The protein belongs to the GcvH family. As to quaternary structure, the glycine cleavage system is composed of four proteins: P, T, L and H. It depends on (R)-lipoate as a cofactor.

In terms of biological role, the glycine cleavage system catalyzes the degradation of glycine. The H protein shuttles the methylamine group of glycine from the P protein to the T protein. This chain is Glycine cleavage system H protein, found in Deinococcus geothermalis (strain DSM 11300 / CIP 105573 / AG-3a).